The primary structure comprises 191 residues: Protein RER1A (191 aa).

Methionine 1 carries the N-acetylmethionine modification. A run of 4 helical transmembrane segments spans residues 39–57 (YRWI…RVYY), 60–80 (GFYI…IGFL), 115–135 (FKFW…TFFS), and 136–156 (VFDV…LFVL).

It belongs to the RER1 family.

The protein localises to the membrane. Functionally, involved in the retrieval of endoplasmic reticulum membrane proteins from the early Golgi compartment. This Arabidopsis thaliana (Mouse-ear cress) protein is Protein RER1A (RER1A).